The sequence spans 43 residues: Venom protein E2 (43 aa).

Intrachain disulfides connect cysteine 3-cysteine 20 and cysteine 14-cysteine 39.

As to expression, expressed by the venom gland.

It is found in the secreted. Neurotoxin. Blocks muscular nicotinic acetylcholine receptors (nAChR). In Micrurus pyrrhocryptus (Coral snake), this protein is Venom protein E2.